The sequence spans 137 residues: Large ribosomal subunit protein uL16c (137 aa).

The protein belongs to the universal ribosomal protein uL16 family. Part of the 50S ribosomal subunit.

The protein resides in the plastid. The protein is Large ribosomal subunit protein uL16c (rpl16) of Helicosporidium sp. subsp. Simulium jonesii (Green alga).